A 340-amino-acid polypeptide reads, in one-letter code: Phenylalanine--tRNA ligase alpha subunit (340 aa).

Residue Glu-255 coordinates Mg(2+).

The protein belongs to the class-II aminoacyl-tRNA synthetase family. Phe-tRNA synthetase alpha subunit type 1 subfamily. As to quaternary structure, tetramer of two alpha and two beta subunits. The cofactor is Mg(2+).

The protein resides in the cytoplasm. The enzyme catalyses tRNA(Phe) + L-phenylalanine + ATP = L-phenylalanyl-tRNA(Phe) + AMP + diphosphate + H(+). This chain is Phenylalanine--tRNA ligase alpha subunit, found in Desulfitobacterium hafniense (strain Y51).